Reading from the N-terminus, the 286-residue chain is Orotidine 5'-phosphate decarboxylase (286 aa).

Residues aspartate 35, 57-59 (KTH), 89-98 (DRKFADIGNT), tyrosine 239, and arginine 257 contribute to the substrate site. Lysine 91 functions as the Proton donor in the catalytic mechanism.

The protein belongs to the OMP decarboxylase family.

It carries out the reaction orotidine 5'-phosphate + H(+) = UMP + CO2. It participates in pyrimidine metabolism; UMP biosynthesis via de novo pathway; UMP from orotate: step 2/2. The polypeptide is Orotidine 5'-phosphate decarboxylase (URA3) (Yarrowia lipolytica (strain CLIB 122 / E 150) (Yeast)).